The sequence spans 462 residues: L-seryl-tRNA(Sec) selenium transferase (462 aa).

Lysine 293 is modified (N6-(pyridoxal phosphate)lysine).

Belongs to the SelA family. Pyridoxal 5'-phosphate serves as cofactor.

It is found in the cytoplasm. The catalysed reaction is L-seryl-tRNA(Sec) + selenophosphate + H(+) = L-selenocysteinyl-tRNA(Sec) + phosphate. The protein operates within aminoacyl-tRNA biosynthesis; selenocysteinyl-tRNA(Sec) biosynthesis; selenocysteinyl-tRNA(Sec) from L-seryl-tRNA(Sec) (bacterial route): step 1/1. Functionally, converts seryl-tRNA(Sec) to selenocysteinyl-tRNA(Sec) required for selenoprotein biosynthesis. The protein is L-seryl-tRNA(Sec) selenium transferase of Clostridium botulinum (strain 657 / Type Ba4).